The sequence spans 2121 residues: Non-reducing polyketide synthase aoiG (2121 aa).

Residues 5 to 258 enclose the Starter acyltransferase (SAT) domain; the sequence is YIFGDQTVRV…LPVSIYAPYH (254 aa). Positions 386 to 817 constitute a Ketosynthase family 3 (KS3) domain; that stretch reads SSKIAIIGFS…GGNTAVLVED (432 aa). Residues Cys-558, His-693, and His-735 each act as for beta-ketoacyl synthase activity in the active site. The Malonyl-CoA:ACP transacylase (MAT) domain occupies 921–1239; sequence FLFTGQGAQQ…LSVLHLAGVR (319 aa). Residues 1302–1433 are N-terminal hotdog fold; sequence QKILEEEMTA…CTIELQRPHQ (132 aa). The PKS/mFAS DH domain occupies 1302–1608; the sequence is QKILEEEMTA…FQKVARRVLE (307 aa). Residue His-1334 is the Proton acceptor; for dehydratase activity of the active site. The C-terminal hotdog fold stretch occupies residues 1461–1608; it reads THKMRRGVAY…FQKVARRVLE (148 aa). Asp-1519 serves as the catalytic Proton donor; for dehydratase activity. Positions 1646 to 1723 constitute a Carrier 1 domain; sequence PHVEDAWQQV…SLRIYLNMSS (78 aa). An O-(pantetheine 4'-phosphoryl)serine modification is found at Ser-1683. The span at 1728 to 1752 shows a compositional bias: low complexity; the sequence is DSIETSSYPTPDESTTTTITSPSGS. The disordered stretch occupies residues 1728 to 1760; the sequence is DSIETSSYPTPDESTTTTITSPSGSDRNVGRNS. The 78-residue stretch at 1763–1840 folds into the Carrier 2 domain; sequence DGVGTTVGLV…AITAALHAIF (78 aa). Ser-1800 is subject to O-(pantetheine 4'-phosphoryl)serine. The interval 1872 to 1976 is TE/CLC (thioesterase/Claisen cyclase) domain; sequence TLFLFPDGSG…ILIDSPNPMG (105 aa).

Pantetheine 4'-phosphate serves as cofactor.

Its function is as follows. Non-reducing polyketide synthase; part of the gene cluster that mediates the biosynthesis of a methylated derivative of known natural products orthosporin and diaporthin. AoiG catalyzes the biosynthesis of the hexaketide isocoumarin scaffold, via condensation of one acetyl-CoA starter unit with 6 malonyl-CoA units. An oxidoreductase that has still to be identified catalyzes the stereospecific reduction of the carbonyl moiety of the hexaketide isocoumarin scaffold to generate the S-configured secondary alcohol at C-11 of orthosporin. The methyltrasferase aoiF then catalyzes the biotransformation of not only orthosporin to diaporthin but also diaporthin to the final product, by performing a tandem methylation of the polyketide core. In Aspergillus oryzae (strain ATCC 42149 / RIB 40) (Yellow koji mold), this protein is Non-reducing polyketide synthase aoiG.